The chain runs to 340 residues: Glycerol-3-phosphate dehydrogenase [NAD(P)+] (340 aa).

4 residues coordinate NADPH: serine 11, tryptophan 12, arginine 33, and lysine 106. Sn-glycerol 3-phosphate-binding residues include lysine 106, glycine 137, and serine 139. Alanine 141 provides a ligand contact to NADPH. The sn-glycerol 3-phosphate site is built by lysine 192, aspartate 245, serine 255, arginine 256, and asparagine 257. Lysine 192 acts as the Proton acceptor in catalysis. An NADPH-binding site is contributed by arginine 256. Valine 280 and glutamate 282 together coordinate NADPH.

It belongs to the NAD-dependent glycerol-3-phosphate dehydrogenase family.

It is found in the cytoplasm. It carries out the reaction sn-glycerol 3-phosphate + NAD(+) = dihydroxyacetone phosphate + NADH + H(+). The catalysed reaction is sn-glycerol 3-phosphate + NADP(+) = dihydroxyacetone phosphate + NADPH + H(+). It participates in membrane lipid metabolism; glycerophospholipid metabolism. Functionally, catalyzes the reduction of the glycolytic intermediate dihydroxyacetone phosphate (DHAP) to sn-glycerol 3-phosphate (G3P), the key precursor for phospholipid synthesis. The protein is Glycerol-3-phosphate dehydrogenase [NAD(P)+] of Bacillus cereus (strain G9842).